A 269-amino-acid chain; its full sequence is Phosphonates import ATP-binding protein PhnC (269 aa).

Residues 2–245 (LVVEGLTCRF…VARELYDLEA (244 aa)) form the ABC transporter domain. Position 34–41 (34–41 (GRSGAGKS)) interacts with ATP.

It belongs to the ABC transporter superfamily. Phosphonates importer (TC 3.A.1.9.1) family. In terms of assembly, the complex is composed of two ATP-binding proteins (PhnC), two transmembrane proteins (PhnE) and a solute-binding protein (PhnD).

The protein resides in the cell inner membrane. The catalysed reaction is phosphonate(out) + ATP + H2O = phosphonate(in) + ADP + phosphate + H(+). In terms of biological role, part of the ABC transporter complex PhnCDE involved in phosphonates import. Responsible for energy coupling to the transport system. This Bradyrhizobium diazoefficiens (strain JCM 10833 / BCRC 13528 / IAM 13628 / NBRC 14792 / USDA 110) protein is Phosphonates import ATP-binding protein PhnC.